The following is a 144-amino-acid chain: Putative golgin subfamily A member 2B (144 aa).

2 disordered regions span residues 1–20 (MDSEEEEEVPQPMPSIPEDL) and 95–132 (SCGRVHRTVPEPEGSAEGGGVHQQAGPGQGRGEGEAAG). Residues 110–131 (AEGGGVHQQAGPGQGRGEGEAA) show a composition bias toward gly residues.

It belongs to the GOLGA2 family.

This chain is Putative golgin subfamily A member 2B (GOLGA2P5), found in Homo sapiens (Human).